The primary structure comprises 598 residues: Arginine--tRNA ligase (598 aa).

The short motif at 140-150 (ANPTGPLHVGH) is the 'HIGH' region element.

Belongs to the class-I aminoacyl-tRNA synthetase family. As to quaternary structure, monomer.

It is found in the cytoplasm. It carries out the reaction tRNA(Arg) + L-arginine + ATP = L-arginyl-tRNA(Arg) + AMP + diphosphate. The polypeptide is Arginine--tRNA ligase (Synechococcus sp. (strain JA-3-3Ab) (Cyanobacteria bacterium Yellowstone A-Prime)).